The chain runs to 30 residues: Ribosome-inactivating protein momorcochin-S (30 aa).

The protein belongs to the ribosome-inactivating protein family. Type 1 RIP subfamily. Post-translationally, glycosylated.

It catalyses the reaction Endohydrolysis of the N-glycosidic bond at one specific adenosine on the 28S rRNA.. In terms of biological role, inactivates eukaryotic 60S ribosomal subunits. The chain is Ribosome-inactivating protein momorcochin-S from Momordica cochinchinensis (Spiny bitter cucumber).